The sequence spans 356 residues: Histidine biosynthesis bifunctional protein HisB (356 aa).

The tract at residues 1–166 is histidinol-phosphatase; sequence MSKKVLFIDR…AICNYLTSLN (166 aa). Asp9 acts as the Nucleophile in catalysis. Positions 9 and 11 each coordinate Mg(2+). Residue Asp11 is the Proton donor of the active site. Zn(2+)-binding residues include Cys93, His95, Cys101, and Cys103. Residue Asp130 participates in Mg(2+) binding. The imidazoleglycerol-phosphate dehydratase stretch occupies residues 167-356; sequence RYAHVKRITK…VLPSSKGVLS (190 aa).

It in the N-terminal section; belongs to the histidinol-phosphatase family. In the C-terminal section; belongs to the imidazoleglycerol-phosphate dehydratase family. Requires Mg(2+) as cofactor. The cofactor is Zn(2+).

Its subcellular location is the cytoplasm. The enzyme catalyses D-erythro-1-(imidazol-4-yl)glycerol 3-phosphate = 3-(imidazol-4-yl)-2-oxopropyl phosphate + H2O. The catalysed reaction is L-histidinol phosphate + H2O = L-histidinol + phosphate. It functions in the pathway amino-acid biosynthesis; L-histidine biosynthesis; L-histidine from 5-phospho-alpha-D-ribose 1-diphosphate: step 6/9. Its pathway is amino-acid biosynthesis; L-histidine biosynthesis; L-histidine from 5-phospho-alpha-D-ribose 1-diphosphate: step 8/9. This is Histidine biosynthesis bifunctional protein HisB from Baumannia cicadellinicola subsp. Homalodisca coagulata.